A 246-amino-acid chain; its full sequence is Spherulin-1A (246 aa).

A signal peptide spans 1 to 19; the sequence is MKSTFLFALFVLFLAASEA. A disordered region spans residues 23-45; the sequence is YPTNPPTTPPTPAPTSTPLPSSA. Over residues 25–39 the composition is skewed to pro residues; the sequence is TNPPTTPPTPAPTST. One can recognise a Cupin type-1 domain in the interval 74-220; it reads FDFKNSKLGV…SLNISSIQTV (147 aa). Residues histidine 123, histidine 125, glutamate 130, and histidine 170 each contribute to the Mn(2+) site. Asparagine 213 carries an N-linked (GlcNAc...) asparagine glycan.

This sequence belongs to the germin family.

It is found in the secreted. Its subcellular location is the cell wall. The sequence is that of Spherulin-1A from Physarum polycephalum (Slime mold).